Reading from the N-terminus, the 66-residue chain is Sodium channel neurotoxin MeuNaTxalpha-7 (66 aa).

In terms of domain architecture, LCN-type CS-alpha/beta spans 2-64; it reads RDGYIADDKN…VPIKVSGKCN (63 aa). Disulfide bonds link Cys-12/Cys-63, Cys-16/Cys-36, Cys-22/Cys-46, and Cys-26/Cys-48. An Asparagine amide modification is found at Asn-64.

Belongs to the long (4 C-C) scorpion toxin superfamily. Sodium channel inhibitor family. Alpha subfamily. In terms of tissue distribution, expressed by the venom gland.

Its subcellular location is the secreted. Its function is as follows. Alpha toxins bind voltage-independently at site-3 of sodium channels (Nav) and inhibit the inactivation of the activated channels, thereby blocking neuronal transmission. In Mesobuthus eupeus (Lesser Asian scorpion), this protein is Sodium channel neurotoxin MeuNaTxalpha-7.